Reading from the N-terminus, the 362-residue chain is Lactosylceramide alpha-2,3-sialyltransferase (362 aa).

Residues 1-5 (MRRPS) are Cytoplasmic-facing. Residues 6-26 (LLLKDILKCTLLVFGVWILYI) form a helical; Signal-anchor for type II membrane protein membrane-spanning segment. The Lumenal portion of the chain corresponds to 27–362 (LKLNYTTEEC…DLSGGIDREF (336 aa)). N-linked (GlcNAc...) asparagine glycosylation is found at Asn-30, Asn-180, Asn-224, and Asn-334. A disulfide bond links Cys-139 and Cys-297.

Belongs to the glycosyltransferase 29 family.

Its subcellular location is the golgi apparatus membrane. It carries out the reaction a beta-D-Gal-(1-&gt;4)-beta-D-Glc-(1&lt;-&gt;1)-Cer(d18:1(4E)) + CMP-N-acetyl-beta-neuraminate = a ganglioside GM3 (d18:1(4E)) + CMP + H(+). It catalyses the reaction ganglioside GA2 (d18:1(4E)/18:0) + CMP-N-acetyl-beta-neuraminate = ganglioside GM2 (d18:1(4E)/18:0) + CMP + H(+). The catalysed reaction is a beta-D-Gal-(1&lt;-&gt;1')-ceramide + CMP-N-acetyl-beta-neuraminate = N-acetyl-alpha-neuraminosyl-(2-&gt;3)-beta-D-galactosyl-(1&lt;-&gt;1')-ceramide + CMP + H(+). The enzyme catalyses ganglioside GA1 (d18:1(4E)/18:0) + CMP-N-acetyl-beta-neuraminate = ganglioside GM1 (d18:1(4E)/18:0) + CMP + H(+). Transfers the sialyl group (N-acetyl-alpha-neuraminyl or NeuAc) from CMP-NeuAc to the non-reducing terminal galactose (Gal) of glycosphingolipids forming gangliosides (important molecules involved in the regulation of multiple cellular processes, including cell proliferation and differentiation, apoptosis, embryogenesis, development, and oncogenesis). Mainly involved in the biosynthesis of ganglioside GM3 but can also use different glycolipids as substrate acceptors such as D-galactosylceramide (GalCer), asialo-GM2 (GA2) and asialo-GM1 (GA1), although less preferentially than beta-D-Gal-(1-&gt;4)-beta-D-Glc-(1&lt;-&gt;1)-Cer (LacCer). The polypeptide is Lactosylceramide alpha-2,3-sialyltransferase (ST3GAL5) (Pan troglodytes (Chimpanzee)).